Here is a 419-residue protein sequence, read N- to C-terminus: MSENIQSVRGMNDCLPDAADAWQGFEAIVRDWLRRYGYREMRTPILEHTGLFKRAIGEVTDIVEKEMYTFVDELNGESLTLRPEGTASSVRAVIQHNLLYDGGKRLWYSGPMFRHERPQKGRYRQFHQVGVEALGFAGPDVDAELIVMCADLWRELGIAPTLQLNTLGDHGARQRHRSKLIAYYEAHRDVLDADAQRRLHSNPLRILDSKNPAMQALNAEAPRLLDELEDEALNHFDALQGLLRANGIAFEINPRLVRGLDYYNRTVFEWVTDQLGAQGTVCAGGRYDGLVEQLGGKPAPAAGFAMGIERLLALVETSGKPIVPAVPDAYIVHAGDTADAFAWQAAATLRGAGLAVVLHCGGGSFKSQMKKADASRARYAVIIGDEEAAAQQVSVKPLRGTAEQTRVELALAIEYLKKA.

It belongs to the class-II aminoacyl-tRNA synthetase family. As to quaternary structure, homodimer.

Its subcellular location is the cytoplasm. The catalysed reaction is tRNA(His) + L-histidine + ATP = L-histidyl-tRNA(His) + AMP + diphosphate + H(+). The protein is Histidine--tRNA ligase of Thiobacillus denitrificans (strain ATCC 25259 / T1).